Reading from the N-terminus, the 1163-residue chain is NACHT, LRR and PYD domains-containing protein 5 (1163 aa).

Composition is skewed to basic and acidic residues over residues 1–42 (MGPP…KDQG), 56–94 (PEKE…KDQG), and 108–127 (PEKD…EQKS). Residues 1 to 201 (MGPPEKESKA…TEADKDNGGD (201 aa)) are disordered. Positions 128-137 (ESTMSPSENV) are enriched in polar residues. Residues 153–173 (ASERKMTSPENDSKSIQKDQG) show a composition bias toward basic and acidic residues. One can recognise an NACHT domain in the interval 243-565 (HTIILHGRPG…AALYYVLEGL (323 aa)). An ATP-binding site is contributed by 249 to 256 (GRPGVGKS). LRR repeat units lie at residues 801–822 (NLKY…LACE), 830–851 (SVET…MIST), 858–878 (RLKC…ISLG), 887–906 (LLQK…CHLL), 915–935 (NLTH…QQLC), 944–964 (ALQR…GFLA), 972–993 (KLTH…LLCE), 1001–1022 (YLQE…DLAC), 1029–1050 (HLKS…TLCE), 1058–1079 (SLRR…ALSL), and 1086–1107 (HLNS…KLCS).

The protein belongs to the NLRP family. Component of the subcortical maternal complex (SCMC), at least composed of NLRP5, KHDC3, OOEP, and TLE6. Within the complex, interacts with OOEP, KHDC3 and TLE6. The SCMC may facilitate translocation of its components between the nuclear and cytoplasmic compartments. As part of the SCMC interacts with the SCMC-associated protein ZBED3. As part of the SCMC interacts with the SCMC-associated protein CFL1/Cofilin-1. Interacts with PRKCE. Interacts with TUBB3 at cytoskeleton microtubules. In terms of processing, phosphorylated by PRKCE.

Its subcellular location is the cytoplasm. The protein localises to the cytoplasmic vesicle. The protein resides in the secretory vesicle. It localises to the cortical granule. It is found in the mitochondrion. Its subcellular location is the nucleus. The protein localises to the nucleolus. The protein resides in the golgi apparatus. Its function is as follows. Component of the subcortical maternal complex (SCMC), a multiprotein complex that plays a key role in early embryonic development. The SCMC complex is a structural constituent of cytoplasmic lattices, which consist in fibrous structures found in the cytoplasm of oocytes and preimplantation embryos. They are required to store maternal proteins critical for embryonic development, such as proteins that control epigenetic reprogramming of the preimplantation embryo, and prevent their degradation or activation. Required for the localization of cortical granules to the cortex of oocytes, via association with the cortical actin scaffold. Required for cortical actin clearance prior to oocyte exocytosis and prevention of polyspermy. Involved in regulating post-fertilization Ca(2+) release and endoplasmic reticulum storage (ER) storage via regulation of cellular localization. May be involved in the localization of mitochondria to the cytoplasm and perinuclear region in oocytes and early stage embryos, independent of its role in CPL formation. The protein is NACHT, LRR and PYD domains-containing protein 5 of Mus musculus (Mouse).